The primary structure comprises 153 residues: UPF0158 protein PA5073 (153 aa).

This sequence belongs to the UPF0158 family.

This Pseudomonas aeruginosa (strain ATCC 15692 / DSM 22644 / CIP 104116 / JCM 14847 / LMG 12228 / 1C / PRS 101 / PAO1) protein is UPF0158 protein PA5073.